The primary structure comprises 255 residues: Hydroxyacylglutathione hydrolase (255 aa).

Zn(2+)-binding residues include His-56, His-58, Asp-60, His-61, His-114, Asp-133, and His-171.

The protein belongs to the metallo-beta-lactamase superfamily. Glyoxalase II family. In terms of assembly, monomer. Zn(2+) serves as cofactor.

It catalyses the reaction an S-(2-hydroxyacyl)glutathione + H2O = a 2-hydroxy carboxylate + glutathione + H(+). It functions in the pathway secondary metabolite metabolism; methylglyoxal degradation; (R)-lactate from methylglyoxal: step 2/2. In terms of biological role, thiolesterase that catalyzes the hydrolysis of S-D-lactoyl-glutathione to form glutathione and D-lactic acid. The sequence is that of Hydroxyacylglutathione hydrolase from Nitrobacter winogradskyi (strain ATCC 25391 / DSM 10237 / CIP 104748 / NCIMB 11846 / Nb-255).